The sequence spans 253 residues: MTTSRCSHLPEVLPDCTSSAAPVVKTVEDCGSLVNGQPQYVMQVSAKDGQLLSTVVRTLATQSPFNDRPMCRICHEGSSQEDLLSPCECTGTLGTIHRSCLEHWLSSSNTSYCELCHFRFAVERKPRPLVEWLRNPGPQHEKRTLFGDMVCFLFITPLATISGWLCLRGAVDHLHFSSRLEAVGLIALTVALFTIYLFWTLVSFRYHCRLYNEWRRTNQRVILLIPKSVNIPSNQQSLLGLHSVKRNSKETIV.

The RING-CH-type zinc finger occupies serine 63 to glutamate 123. Residues cysteine 71, cysteine 74, cysteine 87, cysteine 89, histidine 97, cysteine 100, cysteine 113, and cysteine 116 each contribute to the Zn(2+) site. The next 2 membrane-spanning stretches (helical) occupy residues leucine 145–leucine 165 and alanine 182–valine 202. 2 positions are modified to phosphoserine: serine 237 and serine 243.

Interacts with MARCHF2 and STX6. In terms of tissue distribution, expressed predominantly in lung, colon and spleen. Present in liver (at protein level).

Its subcellular location is the cytoplasmic vesicle membrane. It is found in the early endosome membrane. It carries out the reaction S-ubiquitinyl-[E2 ubiquitin-conjugating enzyme]-L-cysteine + [acceptor protein]-L-lysine = [E2 ubiquitin-conjugating enzyme]-L-cysteine + N(6)-ubiquitinyl-[acceptor protein]-L-lysine.. It participates in protein modification; protein ubiquitination. In terms of biological role, E3 ubiquitin-protein ligase which may be involved in endosomal trafficking. E3 ubiquitin ligases accept ubiquitin from an E2 ubiquitin-conjugating enzyme in the form of a thioester and then directly transfer the ubiquitin to targeted substrates. The polypeptide is E3 ubiquitin-protein ligase MARCHF3 (Marchf3) (Rattus norvegicus (Rat)).